We begin with the raw amino-acid sequence, 256 residues long: Putative transcription factor 001R (256 aa).

Functionally, transcription activation. This chain is Putative transcription factor 001R, found in Frog virus 3 (isolate Goorha) (FV-3).